The sequence spans 185 residues: UPF0301 protein MS0260 (185 aa).

It belongs to the UPF0301 (AlgH) family.

This is UPF0301 protein MS0260 from Mannheimia succiniciproducens (strain KCTC 0769BP / MBEL55E).